The primary structure comprises 132 residues: Small ribosomal subunit protein uS9 (132 aa).

The interval L100–R132 is disordered. The segment covering E114–R132 has biased composition (basic residues).

It belongs to the universal ribosomal protein uS9 family.

The polypeptide is Small ribosomal subunit protein uS9 (Dehalococcoides mccartyi (strain ATCC BAA-2266 / KCTC 15142 / 195) (Dehalococcoides ethenogenes (strain 195))).